The sequence spans 257 residues: Glutamate racemase (257 aa).

Substrate-binding positions include 12–13 (DS) and 44–45 (YG). Cysteine 75 functions as the Proton donor/acceptor in the catalytic mechanism. 76-77 (NT) is a binding site for substrate. Catalysis depends on cysteine 176, which acts as the Proton donor/acceptor. 177–178 (TH) contacts substrate.

Belongs to the aspartate/glutamate racemases family.

It carries out the reaction L-glutamate = D-glutamate. Its pathway is cell wall biogenesis; peptidoglycan biosynthesis. Functionally, provides the (R)-glutamate required for cell wall biosynthesis. The chain is Glutamate racemase from Thermus thermophilus (strain ATCC 27634 / DSM 579 / HB8).